Here is a 147-residue protein sequence, read N- to C-terminus: D-aminoacyl-tRNA deacylase (147 aa).

Positions 138–139 match the Gly-cisPro motif, important for rejection of L-amino acids motif; the sequence is GP.

The protein belongs to the DTD family. As to quaternary structure, homodimer.

It is found in the cytoplasm. The enzyme catalyses glycyl-tRNA(Ala) + H2O = tRNA(Ala) + glycine + H(+). The catalysed reaction is a D-aminoacyl-tRNA + H2O = a tRNA + a D-alpha-amino acid + H(+). An aminoacyl-tRNA editing enzyme that deacylates mischarged D-aminoacyl-tRNAs. Also deacylates mischarged glycyl-tRNA(Ala), protecting cells against glycine mischarging by AlaRS. Acts via tRNA-based rather than protein-based catalysis; rejects L-amino acids rather than detecting D-amino acids in the active site. By recycling D-aminoacyl-tRNA to D-amino acids and free tRNA molecules, this enzyme counteracts the toxicity associated with the formation of D-aminoacyl-tRNA entities in vivo and helps enforce protein L-homochirality. In Prosthecochloris aestuarii (strain DSM 271 / SK 413), this protein is D-aminoacyl-tRNA deacylase.